A 649-amino-acid chain; its full sequence is DNA mismatch repair protein MutL (649 aa).

Residues 339–414 (KKKTKDESVQ…VREEESWQST (76 aa)) are disordered. A compositionally biased stretch (basic and acidic residues) spans 342–360 (TKDESVQEQFHFEHTKPKE). Residues 388 to 402 (PQLWQQPKQEWQPPQ) are compositionally biased toward low complexity.

Belongs to the DNA mismatch repair MutL/HexB family.

Its function is as follows. This protein is involved in the repair of mismatches in DNA. It is required for dam-dependent methyl-directed DNA mismatch repair. May act as a 'molecular matchmaker', a protein that promotes the formation of a stable complex between two or more DNA-binding proteins in an ATP-dependent manner without itself being part of a final effector complex. In Bacillus cytotoxicus (strain DSM 22905 / CIP 110041 / 391-98 / NVH 391-98), this protein is DNA mismatch repair protein MutL.